Reading from the N-terminus, the 91-residue chain is MAVETIQKPETTTKRKIAPRYRVLLHNDDFNPMEYVVMVLMQTVPSLTQPQAVDIMMEAHTNGTGLVITCDIEPAEFYCEQLKSHGLEQQH.

This sequence belongs to the ClpS family. In terms of assembly, binds to the N-terminal domain of the chaperone ClpA.

Involved in the modulation of the specificity of the ClpAP-mediated ATP-dependent protein degradation. The polypeptide is ATP-dependent Clp protease adapter protein ClpS (Synechococcus sp. (strain ATCC 27144 / PCC 6301 / SAUG 1402/1) (Anacystis nidulans)).